The following is a 299-amino-acid chain: Ornithine carbamoyltransferase (299 aa).

Carbamoyl phosphate contacts are provided by residues Ser52–Thr55, Gln79, Arg103, and His130–Gln133. L-ornithine-binding positions include Asn161, Asp218, and Ser222–Met223. Residues Cys258–Leu259 and Arg286 each bind carbamoyl phosphate.

Belongs to the aspartate/ornithine carbamoyltransferase superfamily. OTCase family.

The protein resides in the cytoplasm. It carries out the reaction carbamoyl phosphate + L-ornithine = L-citrulline + phosphate + H(+). The protein operates within amino-acid biosynthesis; L-arginine biosynthesis; L-arginine from L-ornithine and carbamoyl phosphate: step 1/3. Functionally, reversibly catalyzes the transfer of the carbamoyl group from carbamoyl phosphate (CP) to the N(epsilon) atom of ornithine (ORN) to produce L-citrulline. The chain is Ornithine carbamoyltransferase from Ruthia magnifica subsp. Calyptogena magnifica.